We begin with the raw amino-acid sequence, 20 residues long: RGSNLTIHPLRNIIDLFYVG.

Asn-4 is a glycosylation site (N-linked (GlcNAc...) asparagine).

It belongs to the peptidase A1 family. In terms of tissue distribution, chorionic epithelium (trophectoderm) and placental cotyledons.

The protein localises to the secreted. It is found in the extracellular space. This Bison bonasus (European bison) protein is Pregnancy-associated glycoprotein 71D.